Reading from the N-terminus, the 249-residue chain is Protein TIFY 10B (249 aa).

The Tify domain maps to 113 to 148 (PESQSAPLTIFYGGRVMVFDDFSAEKAKEVIDLANK). The Jas motif lies at 204-229 (PIARRASLHRFLEKRKDRITSKAPYQ). The Nuclear localization signal motif lies at 206–213 (ARRASLHR). Residues 225–249 (KAPYQIDGSAEASSKPTNPAWLSSR) form a disordered region. The segment covering 235 to 249 (EASSKPTNPAWLSSR) has biased composition (polar residues).

This sequence belongs to the TIFY/JAZ family. As to quaternary structure, homo- and heterodimer. Interacts with COI1, MYC2, MYC3, MYC4, AFPH2/NINJA, TIFY10A/JAZ1, TIFY6B/JAZ3, TIFY11A/JAZ5, TIFY11B/JAZ6, TIFY5A/JAZ8, TIFY7/JAZ9, TIFY9/JAZ10, TIFY3A/JAZ11 and TIFY3B/JAZ12. Interacts with RHD6 and RSL1. (Microbial infection) Interacts with the pathogenic Pseudomonas syringae HopZ1a protein. (Microbial infection) Acetylated by Pseudomonas syringae HopZ1a. In terms of processing, ubiquitinated. Targeted for degradation by the SCF(COI1) E3 ubiquitin ligase-proteasome pathway during jasmonate signaling. As to expression, expressed in cotyledons, hypocotyls, roots, sepals, petal vascular tissue and stigmas of developing flowers. Expressed in stamen filaments after jasmonic acid treatment.

It is found in the nucleus. Repressor of jasmonate responses. Jasmonoyl-isoleucine (JA-Ile) specifically promotes COI1-TIFY10B/JAZ2 interaction. Activated by MYC2, MYC3 and MYC4 transcription factors. Interacts with and suppresses RHD6 and RSL1 transcription factor activities to negatively regulate jasmonate-stimulated root hair development. This Arabidopsis thaliana (Mouse-ear cress) protein is Protein TIFY 10B.